A 358-amino-acid polypeptide reads, in one-letter code: Hydroxyproline O-arabinosyltransferase 2 (358 aa).

The helical; Signal-anchor transmembrane segment at 7 to 26 (YFFPILMTLSLFLIIRYNYI) threads the bilayer.

In terms of tissue distribution, ubiquitous.

Its subcellular location is the golgi apparatus. The protein resides in the cis-Golgi network membrane. It carries out the reaction trans-4-hydroxy-L-prolyl-[protein] + UDP-beta-L-arabinofuranose = O-(beta-L-arabinofuranosyl)-trans-4-hydroxy-L-prolyl-[protein] + UDP + H(+). In terms of biological role, glycosyltransferase involved in the O-arabinosylation of several proteins including extensins and small signaling peptides. Catalyzes the transfer of the initial L-arabinose to the hydroxyl group of Hyp residues. Contributes redundantly with HPAT1 and HPAT3 to arabinosylation of EXT3. The sequence is that of Hydroxyproline O-arabinosyltransferase 2 from Arabidopsis thaliana (Mouse-ear cress).